We begin with the raw amino-acid sequence, 573 residues long: Sulfate adenylyltransferase (573 aa).

Residues 1–169 are N-terminal; that stretch reads MANSPHGGVL…LEAVNRLQHY (169 aa). Residues 170–394 are catalytic; that stretch reads DFVELRYTPS…LRESHPPRSQ (225 aa). Gln-197 contributes to the sulfate binding site. Residues 197-200 and 291-294 contribute to the ATP site; these read QTRN and GRDH. Catalysis depends on residues Thr-198, Arg-199, and Asn-200. Arg-199 is a sulfate binding site. Ala-295 is a binding site for sulfate. Met-333 lines the ATP pocket. The allosteric regulation domain; adenylyl-sulfate kinase-like stretch occupies residues 395-573; sequence QGFTIFLTGY…LESQGLLDRF (179 aa). 3'-phosphoadenylyl sulfate-binding positions include 434-437, Arg-451, 477-478, and Arg-515; these read ETVR and IA.

This sequence in the N-terminal section; belongs to the sulfate adenylyltransferase family. In the C-terminal section; belongs to the APS kinase family. Homohexamer. Dimer of trimers.

It is found in the cytoplasm. The catalysed reaction is sulfate + ATP + H(+) = adenosine 5'-phosphosulfate + diphosphate. It participates in sulfur metabolism; hydrogen sulfide biosynthesis; sulfite from sulfate: step 1/3. Allosterically inhibited by 3'-phosphoadenosine 5'-phosphosulfate (PAPS). Catalyzes the first intracellular reaction of sulfate assimilation, forming adenosine-5'-phosphosulfate (APS) from inorganic sulfate and ATP. Plays an important role in sulfate activation as a component of the biosynthesis pathway of sulfur-containing amino acids. The chain is Sulfate adenylyltransferase from Chaetomium globosum (strain ATCC 6205 / CBS 148.51 / DSM 1962 / NBRC 6347 / NRRL 1970) (Soil fungus).